Consider the following 126-residue polypeptide: Small ribosomal subunit protein uS13 (126 aa).

The interval 92 to 126 is disordered; sequence HRRGLPANGQRTHTNARTRKGPRKGMLQRRPAATK. Basic residues predominate over residues 105 to 118; that stretch reads TNARTRKGPRKGML.

Belongs to the universal ribosomal protein uS13 family. Part of the 30S ribosomal subunit. Forms a loose heterodimer with protein S19. Forms two bridges to the 50S subunit in the 70S ribosome.

Its function is as follows. Located at the top of the head of the 30S subunit, it contacts several helices of the 16S rRNA. In the 70S ribosome it contacts the 23S rRNA (bridge B1a) and protein L5 of the 50S subunit (bridge B1b), connecting the 2 subunits; these bridges are implicated in subunit movement. Contacts the tRNAs in the A and P-sites. This chain is Small ribosomal subunit protein uS13, found in Sorangium cellulosum (strain So ce56) (Polyangium cellulosum (strain So ce56)).